Consider the following 384-residue polypeptide: PqqA peptide cyclase (384 aa).

The Radical SAM core domain maps to 14-230 (IPAPVGLLAE…EAARERLKGQ (217 aa)). Residues Cys-28, Cys-32, and Cys-35 each coordinate [4Fe-4S] cluster.

This sequence belongs to the radical SAM superfamily. PqqE family. In terms of assembly, interacts with PqqD. The interaction is necessary for activity of PqqE. The cofactor is [4Fe-4S] cluster.

It catalyses the reaction [PQQ precursor protein] + S-adenosyl-L-methionine = E-Y cross-linked-[PQQ precursor protein] + 5'-deoxyadenosine + L-methionine + H(+). The protein operates within cofactor biosynthesis; pyrroloquinoline quinone biosynthesis. Functionally, catalyzes the cross-linking of a glutamate residue and a tyrosine residue in the PqqA protein as part of the biosynthesis of pyrroloquinoline quinone (PQQ). The chain is PqqA peptide cyclase from Methylorubrum extorquens (strain CM4 / NCIMB 13688) (Methylobacterium extorquens).